We begin with the raw amino-acid sequence, 199 residues long: Probable nicotinate-nucleotide adenylyltransferase (199 aa).

The protein belongs to the NadD family.

It carries out the reaction nicotinate beta-D-ribonucleotide + ATP + H(+) = deamido-NAD(+) + diphosphate. It functions in the pathway cofactor biosynthesis; NAD(+) biosynthesis; deamido-NAD(+) from nicotinate D-ribonucleotide: step 1/1. Its function is as follows. Catalyzes the reversible adenylation of nicotinate mononucleotide (NaMN) to nicotinic acid adenine dinucleotide (NaAD). This chain is Probable nicotinate-nucleotide adenylyltransferase, found in Corynebacterium jeikeium (strain K411).